Consider the following 46-residue polypeptide: Major cold shock protein (46 aa).

In terms of domain architecture, CSD spans 1 to 46 (EKGFGFLTQNNGGADVFVHFRAIASEGFKTLTEGQKVSFDVEQGQK).

As to quaternary structure, homodimer.

It localises to the cytoplasm. In Photobacterium leiognathi subsp. mandapamensis (Photobacterium mandapamensis), this protein is Major cold shock protein (cspA).